The chain runs to 100 residues: A-type ATP synthase subunit F (100 aa).

This sequence belongs to the V-ATPase F subunit family. In terms of assembly, has multiple subunits with at least A(3), B(3), C, D, E, F, H, I and proteolipid K(x).

The protein localises to the cell membrane. Component of the A-type ATP synthase that produces ATP from ADP in the presence of a proton gradient across the membrane. This chain is A-type ATP synthase subunit F, found in Methanospirillum hungatei JF-1 (strain ATCC 27890 / DSM 864 / NBRC 100397 / JF-1).